Consider the following 283-residue polypeptide: Nucleotide-binding protein ABBFA_002973 (283 aa).

Residue 9-16 participates in ATP binding; that stretch reads GQSGSGKS. 59 to 62 contacts GTP; sequence DVRS.

The protein belongs to the RapZ-like family.

Its function is as follows. Displays ATPase and GTPase activities. The chain is Nucleotide-binding protein ABBFA_002973 from Acinetobacter baumannii (strain AB307-0294).